The following is an 81-amino-acid chain: Protein I5 homolog (81 aa).

The next 2 helical transmembrane spans lie at Leu8–Val28 and Met53–Ile73.

The protein belongs to the Chordopoxvirinae I5 family.

The protein localises to the virion membrane. This is Protein I5 homolog from Vertebrata (FPV).